The chain runs to 366 residues: Pyruvate dehydrogenase E1 component subunit beta, mitochondrial (366 aa).

Residues 1–33 (MFSRLPTSLARNVARRAPTSFVRPSAAAAALRF) constitute a mitochondrion transit peptide. Glu-95 serves as a coordination point for thiamine diphosphate. Residues Ala-196, Ile-197, Asp-199, and Asn-201 each contribute to the K(+) site.

Pyruvate dehydrogenase (E1) is a tetramer of 2 alpha and 2 beta subunits. Eukaryotic pyruvate dehydrogenase (PDH) complexes are organized as a core consisting of the oligomeric dihydrolipoamide acetyl-transferase (E2), around which are arranged multiple copies of pyruvate dehydrogenase (E1), dihydrolipoamide dehydrogenase (E3) and protein X (E3BP) bound by non-covalent bonds. Thiamine diphosphate serves as cofactor.

The protein localises to the mitochondrion matrix. It carries out the reaction N(6)-[(R)-lipoyl]-L-lysyl-[protein] + pyruvate + H(+) = N(6)-[(R)-S(8)-acetyldihydrolipoyl]-L-lysyl-[protein] + CO2. Its function is as follows. The pyruvate dehydrogenase complex catalyzes the overall conversion of pyruvate to acetyl-CoA and CO(2). This chain is Pyruvate dehydrogenase E1 component subunit beta, mitochondrial (PDB1), found in Saccharomyces cerevisiae (strain ATCC 204508 / S288c) (Baker's yeast).